The following is a 353-amino-acid chain: Photosystem II protein D1 (353 aa).

Position 2 is an N-acetylthreonine (T2). Residue T2 is modified to Phosphothreonine. Transmembrane regions (helical) follow at residues 29-46 (YIGWFGVLMIPTLLTATS), 118-133 (HFLLGVACYMGREWEL), and 142-156 (WIAVAYSAPVAAAAA). H118 contacts chlorophyll a. Pheophytin a is bound at residue Y126. Residues D170 and E189 each coordinate [CaMn4O5] cluster. A helical membrane pass occupies residues 197 to 218 (FHMLGVAGVFGGSLFSAMHGSL). Chlorophyll a is bound at residue H198. A quinone contacts are provided by residues H215 and 264–265 (SF). H215 is a Fe cation binding site. H272 contacts Fe cation. The chain crosses the membrane as a helical span at residues 274 to 288 (FLAAWPVVGIWFTAL). Residues H332, E333, D342, and A344 each contribute to the [CaMn4O5] cluster site. The propeptide occupies 345-353 (SVEAPSVKA).

Belongs to the reaction center PufL/M/PsbA/D family. As to quaternary structure, PSII is composed of 1 copy each of membrane proteins PsbA, PsbB, PsbC, PsbD, PsbE, PsbF, PsbH, PsbI, PsbJ, PsbK, PsbL, PsbM, PsbT, PsbX, PsbY, PsbZ, Psb30/Ycf12, at least 3 peripheral proteins of the oxygen-evolving complex and a large number of cofactors. It forms dimeric complexes. It depends on The D1/D2 heterodimer binds P680, chlorophylls that are the primary electron donor of PSII, and subsequent electron acceptors. It shares a non-heme iron and each subunit binds pheophytin, quinone, additional chlorophylls, carotenoids and lipids. D1 provides most of the ligands for the Mn4-Ca-O5 cluster of the oxygen-evolving complex (OEC). There is also a Cl(-1) ion associated with D1 and D2, which is required for oxygen evolution. The PSII complex binds additional chlorophylls, carotenoids and specific lipids. as a cofactor. Tyr-161 forms a radical intermediate that is referred to as redox-active TyrZ, YZ or Y-Z. In terms of processing, C-terminally processed by CTPA; processing is essential to allow assembly of the oxygen-evolving complex and thus photosynthetic growth.

The protein resides in the plastid. The protein localises to the chloroplast thylakoid membrane. It catalyses the reaction 2 a plastoquinone + 4 hnu + 2 H2O = 2 a plastoquinol + O2. In terms of biological role, photosystem II (PSII) is a light-driven water:plastoquinone oxidoreductase that uses light energy to abstract electrons from H(2)O, generating O(2) and a proton gradient subsequently used for ATP formation. It consists of a core antenna complex that captures photons, and an electron transfer chain that converts photonic excitation into a charge separation. The D1/D2 (PsbA/PsbD) reaction center heterodimer binds P680, the primary electron donor of PSII as well as several subsequent electron acceptors. This is Photosystem II protein D1 from Angiopteris evecta (Mule's foot fern).